The sequence spans 129 residues: Small ribosomal subunit protein uS11 (129 aa).

The protein belongs to the universal ribosomal protein uS11 family. As to quaternary structure, part of the 30S ribosomal subunit. Interacts with proteins S7 and S18. Binds to IF-3.

In terms of biological role, located on the platform of the 30S subunit, it bridges several disparate RNA helices of the 16S rRNA. Forms part of the Shine-Dalgarno cleft in the 70S ribosome. This is Small ribosomal subunit protein uS11 from Bacillus anthracis (strain A0248).